Reading from the N-terminus, the 278-residue chain is MKNDKSYPFPTYSGLLNSEHYDKIGPALWLFLWFISSTTKEIEKDGVSWGIVLGHKPLKAREMAAVFGVSEKTVRRWLELLENHDYIKAVRAPYGLMISVKHSKKFSFRSDNTVHGSLKERPFSPQTPDTNDRTDIDKTNKYTAADDAVDHIAKRFTQLRSAQEGRTVYPSSRDYQAIARIVAIGVPVTQTIKWLEECFQAFENRRTAASETIKAFRYCSKFIEDRFFAQQAKKNAAIQHERMKKHDKTNNRTDFGRAEKRETSITGGQTGRIRRKQV.

Positions 58-80 (LKAREMAAVFGVSEKTVRRWLEL) form a DNA-binding region, H-T-H motif. 2 disordered regions span residues 117 to 136 (SLKE…RTDI) and 239 to 278 (QHER…RKQV). Positions 248–263 (KTNNRTDFGRAEKRET) are enriched in basic and acidic residues.

To B.subtilis YqaL.

The sequence is that of Phage-like element PBSX protein XkdB (xkdB) from Bacillus subtilis (strain 168).